Reading from the N-terminus, the 1133-residue chain is Early transcription factor large subunit homolog (1133 aa).

The region spanning 52–352 (KGGRAFFPCD…PNGQPLQRQQ (301 aa)) is the Helicase ATP-binding domain. 99 to 106 (WQTGTGKS) is a binding site for ATP. A DEAH box motif is present at residues 281 to 284 (DEIH). Residues 524–724 (MMKDILSIIR…EGDKALRKHA (201 aa)) form the Helicase C-terminal domain.

The protein belongs to the DEAD box helicase family. DEAH subfamily.

Its subcellular location is the virion. It catalyses the reaction ATP + H2O = ADP + phosphate + H(+). Its function is as follows. Putative initation factor. This chain is Early transcription factor large subunit homolog, found in Ornithodoros (relapsing fever ticks).